A 399-amino-acid polypeptide reads, in one-letter code: Acetate kinase (399 aa).

Residue Asn-8 participates in Mg(2+) binding. Residue Lys-15 coordinates ATP. A substrate-binding site is contributed by Arg-89. The active-site Proton donor/acceptor is Asp-147. ATP-binding positions include His-207–Gly-211, Asp-284–Arg-286, and Gly-332–Asn-336. Mg(2+) is bound at residue Glu-385.

Belongs to the acetokinase family. As to quaternary structure, homodimer. Mg(2+) is required as a cofactor. Requires Mn(2+) as cofactor.

The protein resides in the cytoplasm. The enzyme catalyses acetate + ATP = acetyl phosphate + ADP. It participates in metabolic intermediate biosynthesis; acetyl-CoA biosynthesis; acetyl-CoA from acetate: step 1/2. Its function is as follows. Catalyzes the formation of acetyl phosphate from acetate and ATP. Can also catalyze the reverse reaction. The sequence is that of Acetate kinase from Streptococcus mutans serotype c (strain ATCC 700610 / UA159).